We begin with the raw amino-acid sequence, 281 residues long: NADPH-dependent 7-cyano-7-deazaguanine reductase (281 aa).

Substrate is bound at residue 86-88 (IES). 88–89 (SK) contacts NADPH. Cysteine 189 acts as the Thioimide intermediate in catalysis. The active-site Proton donor is the aspartate 196. Residue 228–229 (HE) participates in substrate binding. NADPH is bound at residue 257 to 258 (RG).

The protein belongs to the GTP cyclohydrolase I family. QueF type 2 subfamily. Homodimer.

The protein localises to the cytoplasm. The enzyme catalyses 7-aminomethyl-7-carbaguanine + 2 NADP(+) = 7-cyano-7-deazaguanine + 2 NADPH + 3 H(+). The protein operates within tRNA modification; tRNA-queuosine biosynthesis. Its function is as follows. Catalyzes the NADPH-dependent reduction of 7-cyano-7-deazaguanine (preQ0) to 7-aminomethyl-7-deazaguanine (preQ1). The protein is NADPH-dependent 7-cyano-7-deazaguanine reductase of Mannheimia succiniciproducens (strain KCTC 0769BP / MBEL55E).